The following is a 358-amino-acid chain: MQSYNIAVLAGDGIGPEVMAEAIKVLNRVQEKFGFKLNFNEFFVGGAAIEHCGYPLPAETLKGCDQADAILFGSVGGPKWTNLPPDQQPERGALLPLRKHFKLFCNLRPATLYKGLEKFCPLRADIAAKGFDMVVVRELTGGIYFGQPKGREGDGVQTKAFDTEVYYKYEIERIARAAFEAAMKRNKKVTSVDKANVLQSSILWRETVTEMAKDYPEVTLEHIYIDNATMQLIKSPESFDVLLCSNIFGDIISDEAAMITGSMGMLPSASLNEEGFGLYEPAGGSAPDIAGKGIANPIAQILSAAMMLRYSFNLNEAADAIESAVQKVLASGHRTADLADDSTPVSTAEMGTLITQAI.

Gly77–Glu90 provides a ligand contact to NAD(+). The substrate site is built by Arg98, Arg108, Arg137, and Asp226. The Mg(2+) site is built by Asp226, Asp250, and Asp254. Gly284–Asn296 contributes to the NAD(+) binding site.

Belongs to the isocitrate and isopropylmalate dehydrogenases family. LeuB type 1 subfamily. Homodimer. The cofactor is Mg(2+). Mn(2+) serves as cofactor.

The protein localises to the cytoplasm. The catalysed reaction is (2R,3S)-3-isopropylmalate + NAD(+) = 4-methyl-2-oxopentanoate + CO2 + NADH. It participates in amino-acid biosynthesis; L-leucine biosynthesis; L-leucine from 3-methyl-2-oxobutanoate: step 3/4. Functionally, catalyzes the oxidation of 3-carboxy-2-hydroxy-4-methylpentanoate (3-isopropylmalate) to 3-carboxy-4-methyl-2-oxopentanoate. The product decarboxylates to 4-methyl-2 oxopentanoate. The protein is 3-isopropylmalate dehydrogenase (leuB) of Haemophilus influenzae (strain ATCC 51907 / DSM 11121 / KW20 / Rd).